A 209-amino-acid chain; its full sequence is Molybdenum cofactor guanylyltransferase (209 aa).

GTP contacts are provided by residues 16–18 (LAG), lysine 28, asparagine 56, aspartate 69, and aspartate 103. Aspartate 103 lines the Mg(2+) pocket.

This sequence belongs to the MobA family. In terms of assembly, monomer. Mg(2+) is required as a cofactor.

The protein localises to the cytoplasm. The enzyme catalyses Mo-molybdopterin + GTP + H(+) = Mo-molybdopterin guanine dinucleotide + diphosphate. Functionally, transfers a GMP moiety from GTP to Mo-molybdopterin (Mo-MPT) cofactor (Moco or molybdenum cofactor) to form Mo-molybdopterin guanine dinucleotide (Mo-MGD) cofactor. The protein is Molybdenum cofactor guanylyltransferase of Rhizobium johnstonii (strain DSM 114642 / LMG 32736 / 3841) (Rhizobium leguminosarum bv. viciae).